The following is a 236-amino-acid chain: Auxin-responsive protein IAA16 (236 aa).

The short motif at Leu-9–Leu-13 is the EAR-like (transcriptional repression) element. The disordered stretch occupies residues Lys-82–Ser-110. Polar residues predominate over residues Met-85–Asp-94. In terms of domain architecture, PB1 spans Val-118 to Gly-218.

This sequence belongs to the Aux/IAA family. In terms of assembly, homodimers and heterodimers.

The protein resides in the nucleus. In terms of biological role, aux/IAA proteins are short-lived transcriptional factors that function as repressors of early auxin response genes at low auxin concentrations. Repression is thought to result from the interaction with auxin response factors (ARFs), proteins that bind to the auxin-responsive promoter element (AuxRE). Formation of heterodimers with ARF proteins may alter their ability to modulate early auxin response genes expression. The chain is Auxin-responsive protein IAA16 (IAA16) from Arabidopsis thaliana (Mouse-ear cress).